Reading from the N-terminus, the 122-residue chain is Large ribosomal subunit protein uL14c (122 aa).

Belongs to the universal ribosomal protein uL14 family. As to quaternary structure, part of the 50S ribosomal subunit.

The protein localises to the plastid. It localises to the chloroplast. In terms of biological role, binds to 23S rRNA. This Morus indica (Mulberry) protein is Large ribosomal subunit protein uL14c.